Here is a 681-residue protein sequence, read N- to C-terminus: Potassium-transporting ATPase ATP-binding subunit (681 aa).

Transmembrane regions (helical) follow at residues 30 to 50 (LLVY…FFGI), 59 to 79 (LAIA…EAIA), 216 to 236 (ILLV…LPFT), and 255 to 275 (IALL…SIGI). The 4-aspartylphosphate intermediate role is filled by Asp306. ATP-binding positions include Asp343, Glu347, 376 to 383 (FTATTRMS), and Lys394. The Mg(2+) site is built by Asp517 and Asp521. Helical transmembrane passes span 587–607 (FAII…LNLM), 615–635 (AILS…PLSL), and 661–681 (LIAP…LGIV).

The protein belongs to the cation transport ATPase (P-type) (TC 3.A.3) family. Type IA subfamily. The system is composed of three essential subunits: KdpA, KdpB and KdpC.

The protein resides in the cell membrane. It catalyses the reaction K(+)(out) + ATP + H2O = K(+)(in) + ADP + phosphate + H(+). In terms of biological role, part of the high-affinity ATP-driven potassium transport (or Kdp) system, which catalyzes the hydrolysis of ATP coupled with the electrogenic transport of potassium into the cytoplasm. This subunit is responsible for energy coupling to the transport system and for the release of the potassium ions to the cytoplasm. The sequence is that of Potassium-transporting ATPase ATP-binding subunit from Listeria monocytogenes serovar 1/2a (strain ATCC BAA-679 / EGD-e).